Consider the following 226-residue polypeptide: Cytidylate kinase (226 aa).

An ATP-binding site is contributed by 10 to 18 (GPASSGKST).

Belongs to the cytidylate kinase family. Type 1 subfamily.

The protein resides in the cytoplasm. The enzyme catalyses CMP + ATP = CDP + ADP. It catalyses the reaction dCMP + ATP = dCDP + ADP. This Streptococcus pyogenes serotype M28 (strain MGAS6180) protein is Cytidylate kinase.